The sequence spans 276 residues: Large ribosomal subunit protein uL2 (276 aa).

The interval 219-276 (TVRGSVMNPNDHPHGGGEGRSPIGRPSPVTPWGKPALGYKTRKKNKASNKLIVSRRTK) is disordered. The span at 258–276 (KTRKKNKASNKLIVSRRTK) shows a compositional bias: basic residues.

It belongs to the universal ribosomal protein uL2 family. As to quaternary structure, part of the 50S ribosomal subunit. Forms a bridge to the 30S subunit in the 70S ribosome.

Functionally, one of the primary rRNA binding proteins. Required for association of the 30S and 50S subunits to form the 70S ribosome, for tRNA binding and peptide bond formation. It has been suggested to have peptidyltransferase activity; this is somewhat controversial. Makes several contacts with the 16S rRNA in the 70S ribosome. The chain is Large ribosomal subunit protein uL2 from Clostridioides difficile (strain 630) (Peptoclostridium difficile).